The sequence spans 254 residues: Esterase YbfF (254 aa).

Residues serine 89 and histidine 234 contribute to the active site.

The protein belongs to the DmpD/TodF/XylF esterase family.

Its function is as follows. Displays esterase activity toward palmitoyl-CoA, malonyl-CoA and pNP-butyrate. The sequence is that of Esterase YbfF (ybfF) from Escherichia coli (strain K12).